A 261-amino-acid polypeptide reads, in one-letter code: Thiamine thiazole synthase (261 aa).

NAD(+) is bound by residues S40, E59–R60, G67, V133, and H159–D161. Fe cation-binding residues include D161 and H176. 2 residues coordinate NAD(+): S179 and M226. Glycine is bound at residue R236.

The protein belongs to the THI4 family. Homooctamer; tetramer of dimers. The cofactor is Fe(2+).

The enzyme catalyses hydrogen sulfide + glycine + NAD(+) = ADP-5-ethyl-4-methylthiazole-2-carboxylate + nicotinamide + 3 H2O + H(+). Its pathway is cofactor biosynthesis; thiamine diphosphate biosynthesis. Functionally, involved in the biosynthesis of the thiazole moiety of thiamine. Catalyzes the conversion of NAD and glycine to adenosine diphosphate 5-(2-hydroxyethyl)-4-methylthiazole-2-carboxylate (ADT), an adenylated thiazole intermediate, using free sulfide as a source of sulfur. In Methanococcus maripaludis (strain C5 / ATCC BAA-1333), this protein is Thiamine thiazole synthase.